Reading from the N-terminus, the 239-residue chain is Leucine rich adaptor protein 1 (239 aa).

LRR repeat units lie at residues 55–83 (LGDK…LVTL) and 93–114 (LLEE…QYSL). Positions 105–116 (SSLTSSQYSLTG) are enriched in low complexity. The segment at 105–138 (SSLTSSQYSLTGGSPGRSRRGSWDSLPDTSSTDR) is disordered. S118, S126, and S129 each carry phosphoserine.

Forms a tripartite complex with CDC42BPA/CDC42BPB and MYO18A acting as an adapter connecting both. Its binding to CDC42BPA/CDC42BPB results in their activation by abolition of their negative autoregulation. Interacts with CDC42BPA and CDC42BPB. In terms of processing, phosphorylated.

The protein localises to the cytoplasm. Functionally, acts as an activator of the canonical NF-kappa-B pathway and drive the production of pro-inflammatory cytokines. Promotes the antigen (Ag)-presenting and priming function of dendritic cells via the canonical NF-kappa-B pathway. In concert with MYO18A and CDC42BPA/CDC42BPB, is involved in modulating lamellar actomyosin retrograde flow that is crucial to cell protrusion and migration. Activates CDC42BPA/CDC42BPB and targets it to actomyosin through its interaction with MYO18A, leading to MYL9/MLC2 phosphorylation and MYH9/MYH10-dependent actomyosin assembly in the lamella. This is Leucine rich adaptor protein 1 (Lurap1) from Mus musculus (Mouse).